The primary structure comprises 562 residues: Potassium-transporting ATPase potassium-binding subunit (562 aa).

12 helical membrane passes run 6–26 (FLLI…LGGF), 62–82 (YALA…VLLM), 132–152 (GLTV…FALI), 175–195 (LYVL…QGVL), 253–273 (FVQM…FGQV), 283–303 (LIWA…YAEL), 327–347 (FGIL…CGAV), 356–376 (ALGG…FGGV), 379–399 (GLYG…LMIG), 416–436 (MTAL…ALAL), 483–503 (LLLA…VLAI), and 526–546 (LFIG…FIPA).

It belongs to the KdpA family. In terms of assembly, the system is composed of three essential subunits: KdpA, KdpB and KdpC.

The protein resides in the cell inner membrane. Part of the high-affinity ATP-driven potassium transport (or Kdp) system, which catalyzes the hydrolysis of ATP coupled with the electrogenic transport of potassium into the cytoplasm. This subunit binds the periplasmic potassium ions and delivers the ions to the membrane domain of KdpB through an intramembrane tunnel. The protein is Potassium-transporting ATPase potassium-binding subunit of Yersinia pseudotuberculosis serotype IB (strain PB1/+).